The sequence spans 227 residues: Octanoyltransferase (227 aa).

The BPL/LPL catalytic domain maps to 35–210; it reads DKTPDEIWLV…TFLQLVGYSA (176 aa). Residues 74-81, 141-143, and 154-156 contribute to the substrate site; these read RGGQVTYH, SLG, and GLA. Cys172 serves as the catalytic Acyl-thioester intermediate.

It belongs to the LipB family.

The protein resides in the cytoplasm. It carries out the reaction octanoyl-[ACP] + L-lysyl-[protein] = N(6)-octanoyl-L-lysyl-[protein] + holo-[ACP] + H(+). The protein operates within protein modification; protein lipoylation via endogenous pathway; protein N(6)-(lipoyl)lysine from octanoyl-[acyl-carrier-protein]: step 1/2. Functionally, catalyzes the transfer of endogenously produced octanoic acid from octanoyl-acyl-carrier-protein onto the lipoyl domains of lipoate-dependent enzymes. Lipoyl-ACP can also act as a substrate although octanoyl-ACP is likely to be the physiological substrate. The chain is Octanoyltransferase from Pectobacterium atrosepticum (strain SCRI 1043 / ATCC BAA-672) (Erwinia carotovora subsp. atroseptica).